We begin with the raw amino-acid sequence, 370 residues long: Succinoglycan biosynthesis protein ExoH (370 aa).

A run of 10 helical transmembrane segments spans residues 14-34 (ILLI…WSPF), 46-66 (VFLG…ISGY), 88-108 (TVLL…YAIQ), 144-164 (LYFL…ALLV), 170-190 (VTLL…IFLK), 193-213 (ILFG…IKML), 216-236 (FAAP…VGLY), 244-264 (LWLD…SWAI), 282-302 (GLSF…WMIW), and 307-327 (LSYY…ILVA). The segment at 350–370 (AKRMATQPPQGAQAGYSPQQR) is disordered.

Belongs to the acyltransferase 3 family.

It is found in the cell membrane. It participates in glycan metabolism; exopolysaccharide biosynthesis. Required for the succinyl modification of the seventh sugar (glucose) of the octasaccharide subunit of succinoglycan (EPS I). This chain is Succinoglycan biosynthesis protein ExoH (exoH), found in Rhizobium meliloti (strain 1021) (Ensifer meliloti).